A 163-amino-acid chain; its full sequence is Large ribosomal subunit protein uL11 (163 aa).

Belongs to the universal ribosomal protein uL11 family. As to quaternary structure, part of the ribosomal stalk of the 50S ribosomal subunit. Interacts with L10 and the large rRNA to form the base of the stalk. L10 forms an elongated spine to which L12 dimers bind in a sequential fashion forming a multimeric L10(L12)X complex.

Functionally, forms part of the ribosomal stalk which helps the ribosome interact with GTP-bound translation factors. The chain is Large ribosomal subunit protein uL11 from Thermococcus onnurineus (strain NA1).